The chain runs to 272 residues: Ribonuclease 3 (272 aa).

Residues 1 to 22 (MSLQFLRSEASDGAGETSDASS) are disordered. An RNase III domain is found at 31 to 162 (TATHLARLTG…LVGAIYLDQG (132 aa)). Glu-75 lines the Mg(2+) pocket. Asp-79 is an active-site residue. Residues Asp-148 and Glu-151 each contribute to the Mg(2+) site. Glu-151 is an active-site residue. One can recognise a DRBM domain in the interval 189–258 (NYKSRLIEYT…AKEAMKRLES (70 aa)).

The protein belongs to the ribonuclease III family. Homodimer. Mg(2+) is required as a cofactor.

Its subcellular location is the cytoplasm. It carries out the reaction Endonucleolytic cleavage to 5'-phosphomonoester.. Digests double-stranded RNA. Involved in the processing of primary rRNA transcript to yield the immediate precursors to the large and small rRNAs (23S and 16S). Processes some mRNAs, and tRNAs when they are encoded in the rRNA operon. Processes pre-crRNA and tracrRNA of type II CRISPR loci if present in the organism. The polypeptide is Ribonuclease 3 (Chlorobaculum tepidum (strain ATCC 49652 / DSM 12025 / NBRC 103806 / TLS) (Chlorobium tepidum)).